The following is a 373-amino-acid chain: Polygalacturonase (373 aa).

Residues methionine 1–arginine 24 form the signal peptide. Residues cysteine 27 and cysteine 42 are joined by a disulfide bond. Residues asparagine 65 and asparagine 94 are each glycosylated (N-linked (GlcNAc...) asparagine). PbH1 repeat units lie at residues threonine 136–glycine 158, serine 159–serine 197, serine 198–serine 219, glycine 220–serine 240, valine 249–serine 270, isoleucine 278–glutamine 300, threonine 312–alanine 333, and cysteine 345–asparagine 369. Aspartate 212 serves as the catalytic Proton donor. Cysteines 214 and 230 form a disulfide. Histidine 234 is a catalytic residue. N-linked (GlcNAc...) asparagine glycans are attached at residues asparagine 280 and asparagine 290. Intrachain disulfides connect cysteine 340/cysteine 345 and cysteine 364/cysteine 371.

It belongs to the glycosyl hydrolase 28 family.

The protein localises to the secreted. The enzyme catalyses (1,4-alpha-D-galacturonosyl)n+m + H2O = (1,4-alpha-D-galacturonosyl)n + (1,4-alpha-D-galacturonosyl)m.. Involved in maceration and soft-rotting of plant tissue. Hydrolyzes the 1,4-alpha glycosidic bonds of de-esterified pectate in the smooth region of the plant cell wall. The polypeptide is Polygalacturonase (PGA) (Fusarium fujikuroi (Bakanae and foot rot disease fungus)).